A 185-amino-acid chain; its full sequence is Large ribosomal subunit protein uL5 (185 aa).

The protein belongs to the universal ribosomal protein uL5 family. As to quaternary structure, part of the 50S ribosomal subunit; part of the 5S rRNA/L5/L18/L25 subcomplex. Contacts the 5S rRNA and the P site tRNA. Forms a bridge to the 30S subunit in the 70S ribosome.

Functionally, this is one of the proteins that bind and probably mediate the attachment of the 5S RNA into the large ribosomal subunit, where it forms part of the central protuberance. In the 70S ribosome it contacts protein S13 of the 30S subunit (bridge B1b), connecting the 2 subunits; this bridge is implicated in subunit movement. Contacts the P site tRNA; the 5S rRNA and some of its associated proteins might help stabilize positioning of ribosome-bound tRNAs. The protein is Large ribosomal subunit protein uL5 of Brucella abortus (strain S19).